Consider the following 389-residue polypeptide: Probable tRNA sulfurtransferase (389 aa).

The 109-residue stretch at 57 to 165 (DEALDRLSKI…EDETYIYHRV (109 aa)) folds into the THUMP domain. ATP is bound by residues 183-184 (LL), Lys-267, Gly-289, and Gln-298.

The protein belongs to the ThiI family.

The protein localises to the cytoplasm. The catalysed reaction is [ThiI sulfur-carrier protein]-S-sulfanyl-L-cysteine + a uridine in tRNA + 2 reduced [2Fe-2S]-[ferredoxin] + ATP + H(+) = [ThiI sulfur-carrier protein]-L-cysteine + a 4-thiouridine in tRNA + 2 oxidized [2Fe-2S]-[ferredoxin] + AMP + diphosphate. The enzyme catalyses [ThiS sulfur-carrier protein]-C-terminal Gly-Gly-AMP + S-sulfanyl-L-cysteinyl-[cysteine desulfurase] + AH2 = [ThiS sulfur-carrier protein]-C-terminal-Gly-aminoethanethioate + L-cysteinyl-[cysteine desulfurase] + A + AMP + 2 H(+). The protein operates within cofactor biosynthesis; thiamine diphosphate biosynthesis. Catalyzes the ATP-dependent transfer of a sulfur to tRNA to produce 4-thiouridine in position 8 of tRNAs, which functions as a near-UV photosensor. Also catalyzes the transfer of sulfur to the sulfur carrier protein ThiS, forming ThiS-thiocarboxylate. This is a step in the synthesis of thiazole, in the thiamine biosynthesis pathway. The sulfur is donated as persulfide by IscS. The polypeptide is Probable tRNA sulfurtransferase (Methanothermobacter thermautotrophicus (strain ATCC 29096 / DSM 1053 / JCM 10044 / NBRC 100330 / Delta H) (Methanobacterium thermoautotrophicum)).